The chain runs to 156 residues: Ribonuclease pancreatic (156 aa).

The first 28 residues, 1-28 (MALEKSLALLPLLVLVLLVLGWVQPSLG), serve as a signal peptide directing secretion. Basic and acidic residues predominate over residues 33–43 (AQKFQRQHMDS). The disordered stretch occupies residues 33–52 (AQKFQRQHMDSDGSPSSNPT). Lys-35 and Arg-38 together coordinate substrate. Catalysis depends on His-40, which acts as the Proton acceptor. 4 disulfides stabilise this stretch: Cys-54–Cys-112, Cys-68–Cys-123, Cys-86–Cys-138, and Cys-93–Cys-100. The N-linked (GlcNAc...) asparagine glycan is linked to Asn-62. Substrate contacts are provided by residues 69 to 73 (KPVNT), Lys-94, and Arg-113. An N-linked (GlcNAc...) asparagine glycan is attached at Asn-116. The active-site Proton donor is the His-147.

The protein belongs to the pancreatic ribonuclease family. Monomer. Interacts with and forms tight 1:1 complexes with RNH1. Dimerization of two such complexes may occur. Interaction with RNH1 inhibits this protein.

The protein localises to the secreted. The enzyme catalyses an [RNA] containing cytidine + H2O = an [RNA]-3'-cytidine-3'-phosphate + a 5'-hydroxy-ribonucleotide-3'-[RNA].. The catalysed reaction is an [RNA] containing uridine + H2O = an [RNA]-3'-uridine-3'-phosphate + a 5'-hydroxy-ribonucleotide-3'-[RNA].. Endonuclease that catalyzes the cleavage of RNA on the 3' side of pyrimidine nucleotides. Acts on single-stranded and double-stranded RNA. The sequence is that of Ribonuclease pancreatic (RNASE1) from Saguinus oedipus (Cotton-top tamarin).